The sequence spans 199 residues: 5'-deoxynucleotidase YfbR (199 aa).

Residues 18–19 (RW) and His33 contribute to the substrate site. In terms of domain architecture, HD spans 30–142 (VSEHSLQVAM…VKQADALCAY (113 aa)). The a divalent metal cation site is built by His33, His68, and Asp69. Residues Asp69, 77-80 (DLPT), and Asp137 contribute to the substrate site. Asp137 provides a ligand contact to a divalent metal cation.

The protein belongs to the 5DNU family. In terms of assembly, homodimer. It depends on a divalent metal cation as a cofactor.

It localises to the cytoplasm. The catalysed reaction is a 2'-deoxyribonucleoside 5'-phosphate + H2O = a 2'-deoxyribonucleoside + phosphate. Catalyzes the strictly specific dephosphorylation of 2'-deoxyribonucleoside 5'-monophosphates. This is 5'-deoxynucleotidase YfbR from Salmonella agona (strain SL483).